The primary structure comprises 218 residues: Large ribosomal subunit protein uL3 (218 aa).

The tract at residues histidine 126–arginine 170 is disordered.

The protein belongs to the universal ribosomal protein uL3 family. As to quaternary structure, part of the 50S ribosomal subunit. Forms a cluster with proteins L14 and L19.

Its function is as follows. One of the primary rRNA binding proteins, it binds directly near the 3'-end of the 23S rRNA, where it nucleates assembly of the 50S subunit. This chain is Large ribosomal subunit protein uL3, found in Prochlorococcus marinus (strain MIT 9313).